The sequence spans 149 residues: Protein SprT-like (149 aa).

A SprT-like domain is found at 5-143 (DYVKQVSLED…CGLCRGKLLL (139 aa)). Histidine 64 is a Zn(2+) binding site. Glutamate 65 is a catalytic residue. Histidine 68 is a Zn(2+) binding site.

The protein belongs to the SprT family. Zn(2+) serves as cofactor.

The protein resides in the cytoplasm. The sequence is that of Protein SprT-like from Streptococcus pneumoniae (strain Hungary19A-6).